The sequence spans 210 residues: Glutathione S-transferase P 1 (210 aa).

In terms of domain architecture, GST N-terminal spans 1-80 (PEYTIIYFNA…LLARNHDLYG (80 aa)). Glutathione is bound by residues Tyr7, Arg13, Trp38, Lys44, 51–52 (QL), and 64–65 (QS). The 122-residue stretch at 82–203 (NPREASLIDM…SSDAHKKRPI (122 aa)) folds into the GST C-terminal domain.

It belongs to the GST superfamily. Pi family. In terms of assembly, homodimer.

The protein localises to the cytoplasm. The protein resides in the mitochondrion. Its subcellular location is the nucleus. The enzyme catalyses RX + glutathione = an S-substituted glutathione + a halide anion + H(+). Functionally, conjugation of reduced glutathione to a wide number of exogenous and endogenous hydrophobic electrophiles. The protein is Glutathione S-transferase P 1 of Bufo bufo (European toad).